The chain runs to 837 residues: Striatin-interacting protein 1 (837 aa).

M1 carries the N-acetylmethionine modification. The segment at 1–67 is disordered; sequence MEPAAGTPGP…DSEGYSESPD (67 aa). Over residues 18-35 the composition is skewed to pro residues; the sequence is PQPPPPPPPATAQPPPGA. Residues 47 to 60 show a composition bias toward basic and acidic residues; the sequence is KAREFNRNQRKDSE. S59, S335, and S339 each carry phosphoserine. A disordered region spans residues 336 to 423; it reads PPASASDLIE…DRLTCPKGLP (88 aa). Over residues 356–377 the composition is skewed to basic and acidic residues; it reads KALIKQDNLDAFNERDPYKADD. Over residues 378–391 the composition is skewed to acidic residues; it reads SREEEEENDDDNSL. A Phosphoserine modification is found at S788. The segment at 796–837 is required for STRIPAK core complex formation; that stretch reads DNCLQSVLGQRVDLPEDFQMNYDLWLEREVFSKPISWEELLQ.

It belongs to the STRIP family. In terms of assembly, part of the core of STRIPAK complexes composed of PP2A catalytic and scaffolding subunits, the striatins (PP2A regulatory subunits), the striatin-associated proteins MOB4, STRIP1 and STRIP2, PDCD10 and members of the STE20 kinases, such as STK24 and STK26. The STRIPAK complex can be extended by adapter proteins such as SLMAP:SIKE1, CTTNBP2 or CTTNBP2NL. Interacts with CDC42BPB. Interacts with CTTNBP2NL.

The protein resides in the cytoplasm. Functionally, plays a role in the regulation of cell morphology and cytoskeletal organization. Required in the cortical actin filament dynamics and cell shape. Part of the striatin-interacting phosphatase and kinase (STRIPAK) complexes. STRIPAK complexes have critical roles in protein (de)phosphorylation and are regulators of multiple signaling pathways including Hippo, MAPK, nuclear receptor and cytoskeleton remodeling. Different types of STRIPAK complexes are involved in a variety of biological processes such as cell growth, differentiation, apoptosis, metabolism and immune regulation. The chain is Striatin-interacting protein 1 (STRIP1) from Bos taurus (Bovine).